The chain runs to 278 residues: MTTRIDTRFADLKQQGRPALVTFVMAGDPDLDTSLQILKALPAAGADVIEIGMPFTDPMADGPAIQAAGLRALKAGTTLKKTLGLVRDFRATDNATPLVLMGYYNPIYIYGVDAFLADAKAAGVDGLIIVDLPPEEDEELCLPAMKAGLNFIRLATPTTDEKRLPAVLANTSGFVYYVSITGITGSASADASAVGAAVQRIKRHTNLPVCVGFGIRTPDAAQAIAAQANGAVVGSALIDALKASLDAEGRATKGTVGAVADLVASLAAGVRGAKQAAE.

Catalysis depends on proton acceptor residues E50 and D61.

The protein belongs to the TrpA family. In terms of assembly, tetramer of two alpha and two beta chains.

The catalysed reaction is (1S,2R)-1-C-(indol-3-yl)glycerol 3-phosphate + L-serine = D-glyceraldehyde 3-phosphate + L-tryptophan + H2O. The protein operates within amino-acid biosynthesis; L-tryptophan biosynthesis; L-tryptophan from chorismate: step 5/5. Functionally, the alpha subunit is responsible for the aldol cleavage of indoleglycerol phosphate to indole and glyceraldehyde 3-phosphate. The chain is Tryptophan synthase alpha chain from Rhodopseudomonas palustris (strain TIE-1).